A 285-amino-acid chain; its full sequence is Undecaprenyl-diphosphatase (285 aa).

The next 7 helical transmembrane spans lie at 3 to 23, 41 to 61, 87 to 107, 109 to 129, 197 to 217, 226 to 246, and 260 to 280; these read ILLL…EFLP, GEIV…AVIW, LLIA…LIKE, LFHP…ILWV, TEFS…YSLI, GDLP…LVCI, and VFAW…WGGW.

It belongs to the UppP family.

The protein localises to the cell inner membrane. The catalysed reaction is di-trans,octa-cis-undecaprenyl diphosphate + H2O = di-trans,octa-cis-undecaprenyl phosphate + phosphate + H(+). Its function is as follows. Catalyzes the dephosphorylation of undecaprenyl diphosphate (UPP). Confers resistance to bacitracin. The sequence is that of Undecaprenyl-diphosphatase from Methylibium petroleiphilum (strain ATCC BAA-1232 / LMG 22953 / PM1).